Consider the following 429-residue polypeptide: GTPase Obg (429 aa).

The Obg domain occupies 1 to 158 (MLIDKCTLFL…IEAQFELKYI (158 aa)). Residues 159-330 (ADVGLLGLPN…LLKDIFKDYK (172 aa)) form the OBG-type G domain. GTP is bound by residues 165–172 (GLPNAGKS), 190–194 (FTTLS), 211–214 (DIPG), 281–284 (NKID), and 311–313 (SGF). Positions 172 and 192 each coordinate Mg(2+). One can recognise an OCT domain in the interval 351–429 (KVEKEQEDIV…RIQDVMFEIN (79 aa)).

This sequence belongs to the TRAFAC class OBG-HflX-like GTPase superfamily. OBG GTPase family. Monomer. Mg(2+) serves as cofactor.

The protein localises to the cytoplasm. Its function is as follows. An essential GTPase which binds GTP, GDP and possibly (p)ppGpp with moderate affinity, with high nucleotide exchange rates and a fairly low GTP hydrolysis rate. Plays a role in control of the cell cycle, stress response, ribosome biogenesis and in those bacteria that undergo differentiation, in morphogenesis control. The sequence is that of GTPase Obg from Malacoplasma penetrans (strain HF-2) (Mycoplasma penetrans).